A 62-amino-acid polypeptide reads, in one-letter code: Synergistic-type venom protein C8S2, chain 2 (62 aa).

3 disulfides stabilise this stretch: C3/C24, C17/C42, and C46/C57.

Belongs to the three-finger toxin family. Short-chain subfamily. Aminergic toxin sub-subfamily. In terms of assembly, heterodimer of C8S2 chain 1 (AC P01410) and chain 2; disulfide-linked. In terms of tissue distribution, expressed by the venom gland.

The protein localises to the secreted. Its function is as follows. This protein shows a synergetic toxic effect in that it enhances the toxicity of other toxins. The chain is Synergistic-type venom protein C8S2, chain 2 from Dendroaspis angusticeps (Eastern green mamba).